We begin with the raw amino-acid sequence, 183 residues long: Pyruvoyl-dependent arginine decarboxylase 2 (183 aa).

Position 41 is a pyruvic acid (Ser) (Ser-41).

The protein belongs to the PdaD family. Requires pyruvate as cofactor.

It carries out the reaction L-arginine + H(+) = agmatine + CO2. The protein is Pyruvoyl-dependent arginine decarboxylase 2 (pdaD2) of Methanosarcina mazei (strain ATCC BAA-159 / DSM 3647 / Goe1 / Go1 / JCM 11833 / OCM 88) (Methanosarcina frisia).